Reading from the N-terminus, the 289-residue chain is Rhomboid-type serine protease 2 (289 aa).

6 helical membrane passes run 26–46 (VVII…VDIQ), 67–87 (FPFI…LTPL), 100–120 (CLAL…IGLE), 122–142 (FVFG…LLLG), 157–179 (IGTY…AVLV), and 184–203 (FWGH…SSTL). Residue Ser134 is the Nucleophile of the active site. The active site involves His187.

This sequence belongs to the peptidase S54 family.

The protein resides in the golgi apparatus membrane. Its subcellular location is the golgi apparatus. It is found in the cis-Golgi network membrane. It carries out the reaction Cleaves type-1 transmembrane domains using a catalytic dyad composed of serine and histidine that are contributed by different transmembrane domains.. In terms of biological role, probable rhomboid-type serine protease that catalyzes intramembrane proteolysis. The protein is Rhomboid-type serine protease 2 (RBD2) of Podospora anserina (Pleurage anserina).